Consider the following 517-residue polypeptide: Pentatricopeptide repeat-containing protein At1g77360, mitochondrial (517 aa).

The N-terminal 59 residues, 1-59, are a transit peptide targeting the mitochondrion; sequence MKRFRIRSVDFRQLVNFFSFMRWECSSSATVWVRFNMTIRIINRQSRFCCKSFLSARLY. 10 PPR repeats span residues 133–163, 167–201, 202–232, 236–270, 271–305, 306–340, 341–375, 376–406, 410–444, and 445–479; these read SVRA…MRKK, NVET…DLPP, NLVA…MRDR, DSKT…GCHP, DIVT…ICKP, TTFI…GMKA, DVAV…GVTP, NSKS…MIKV, DADT…GVFP, and SMHT…GIRP.

It belongs to the PPR family. P subfamily.

The protein localises to the mitochondrion. This Arabidopsis thaliana (Mouse-ear cress) protein is Pentatricopeptide repeat-containing protein At1g77360, mitochondrial.